A 3471-amino-acid chain; its full sequence is Abnormal spindle-like microcephaly-associated protein homolog (3471 aa).

Residues 1–26 (MANRRVGRGCWEVSPTERRPPAAEEE) are disordered. 5 positions are modified to phosphoserine: serine 274, serine 277, serine 361, serine 386, and serine 419. A compositionally biased stretch (polar residues) spans 555-564 (EVTPSSTTAS). The disordered stretch occupies residues 555-576 (EVTPSSTTASVARKRKSDGSME). Serine 599 carries the post-translational modification Phosphoserine. Residues 914–1050 (KASKEILLAF…LLWKIAFAFQ (137 aa)) form the Calponin-homology (CH) 1 domain. Positions 1051 to 1072 (VDISLNLDQLKEEIAFLKHTKS) form a coiled coil. Position 1097 is a phosphoserine (serine 1097). The Calponin-homology (CH) 2 domain maps to 1104–1255 (SENIKLLMDW…YLSFLCARLL (152 aa)). 39 consecutive IQ domains span residues 1341–1372 (QNKAASLIQGYWRRYSTRRRFLKLKYYSIILQ), 1387–1416 (YLWATVTIQRHWRAYLRRKQDQQRYEMLKS), 1576–1607 (LKKTIIKLQAHVRKHQQLQKYKKMKKAAVIIQ), 1599–1628 (MKKAAVIIQTHFRAYIFARKVLASYQKTRS), 1626–1655 (TRSAVIVLQSAYRGMQARKMYIHILTSVIK), 1649–1678 (ILTSVIKIQSYYRAYVSKKEFLSLKNATIK), 1722–1751 (MRESCIKLQAFVRGYRVRKQMRLQRKAVIS), 1745–1776 (QRKAVISLQSYFRMRKARQYYLKMYKAIIVIQ), 1795–1824 (VKKAATCLQAAYRGYKVRQLIKQQSIAALK), 1818–1847 (QSIAALKIQSAFRGYNKRIKYQSVLQSIIK), 1868–1897 (TKAAVISLQSTYRGWKVRKQIRREHQAALK), 1891–1922 (EHQAALKIQSAFRMAKARKQFRLFKTAALVIQ), 1941–1972 (LRHAVLMLQSMWKGKTLRRQLQRQHKCAIIIQ), 1964–1995 (QHKCAIIIQSYYRMHVQQKKWKIMKKAALLIQ), 2014–2043 (TKAAVVTLQSAYRGMKVRKRIKDCNKAAVT), 2037–2068 (CNKAAVTIQSKYRAYKTKKKYATYRASAIIIQ), 2087–2118 (LKKTAIKIQSVYRGIRVRRHIQHMHRAATFIK), 2110–2141 (MHRAATFIKAMFKMHQSRISYHTMRKAAIVIQ), 2160–2191 (ILKAVKILQASFRGVRVRRTLRKMQIAATLIQ), 2183–2212 (MQIAATLIQSNYRRYRQQTYFNKLKKITKT), 2233–2264 (LRHSVIYIQAIFRGKKARRHLKMMHIAATLIQ), 2256–2287 (MHIAATLIQRRFRTLMMRRRFLSLKKTAIWIQ), 2305–2336 (VQNAVIKIQSSYRRWMIRKRMREMHRAATFIQ), 2378–2409 (QRHSAVILQAAFRGMKTRRHLKSMHSSATLIQ), 2401–2432 (MHSSATLIQSRFRSLLVRRRFISLKKATIFVQ), 2451–2482 (LRKSAITIQSSYRRLMVKKKLQEMQRAAVLIQ), 2524–2555 (QWHSAVVIQAAYKGMKARQLLREKHKAAIIIQ), 2659–2690 (RTQAVICIQSYYRGFKVRKDIQNMHRAATLIQ), 2682–2713 (MHRAATLIQSFYRMHRAKVDYQTKKTAIVVIQ), 2732–2761 (VQKSVRTIQPAFRGMKVRQKLKNLSEEKMA), 2853–2884 (QKRAAITLQHYFRTWQTRKQFLLYRKAAVVLQ), 2903–2932 (IRSSVIIIQARSKGFIQKRKFQEIKNSTIK), 2926–2957 (IKNSTIKIQAIWRRYRAKKYLCKVKAACKIQA), 2948–2979 (KVKAACKIQAWYRCWRAHKEYLAILKAVKIIQ), 3023–3054 (RHRATCLIQAHYRGYKGRQVFLRQKSAALVIQ), 3073–3104 (FKKSTVILQALVRGWLVRKRILEQRAKIRLLH), 3134–3163 (QVNSVICIQRWFRARLQRKRFIQKYHSIKK), 3175–3204 (QNRAASVIQKAVRHFLLRKKQEKFTSGIIK), and 3198–3229 (FTSGIIKIQALWRGYSWRKKNDCTKIKAIRLS).

The protein resides in the cytoplasm. It localises to the cytoskeleton. The protein localises to the spindle. It is found in the nucleus. Probable role in mitotic spindle regulation and coordination of mitotic processes. May have a preferential role in regulating neurogenesis. This is Abnormal spindle-like microcephaly-associated protein homolog (ASPM) from Pongo pygmaeus (Bornean orangutan).